A 670-amino-acid chain; its full sequence is Kinesin-like protein KIF2B (670 aa).

Threonine 122 bears the Phosphothreonine; by PLK1 mark. The stretch at 146–173 forms a coiled coil; it reads CLQEIEKVQKQREKRRRLQQEIRARRAL. Serine 201 carries the post-translational modification Phosphoserine; by PLK1. The region spanning 210–540 is the Kinesin motor domain; it reads RICVCVRKRP…LRYANRVKEL (331 aa). 300–307 contributes to the ATP binding site; sequence GQTGSGKT.

This sequence belongs to the TRAFAC class myosin-kinesin ATPase superfamily. Kinesin family. MCAK/KIF2 subfamily. Phosphorylation at Thr-122 by PLK1 is required for activity in the correction of kinetochore-microtubules attachment errors, while phosphorylation at Ser-201 also by PLK1 is required for the kinetochore localization and activity in prometaphase.

The protein localises to the cytoplasm. It localises to the cytoskeleton. Its subcellular location is the microtubule organizing center. It is found in the centrosome. The protein resides in the spindle. The protein localises to the chromosome. It localises to the centromere. Its subcellular location is the kinetochore. Plus end-directed microtubule-dependent motor required for spindle assembly and chromosome movement during mitosis. Has microtubule depolymerization activity. Plays a role in chromosome congression. The polypeptide is Kinesin-like protein KIF2B (KIF2B) (Macaca fascicularis (Crab-eating macaque)).